We begin with the raw amino-acid sequence, 237 residues long: Phosphoribosylaminoimidazole-succinocarboxamide synthase (237 aa).

Belongs to the SAICAR synthetase family.

The enzyme catalyses 5-amino-1-(5-phospho-D-ribosyl)imidazole-4-carboxylate + L-aspartate + ATP = (2S)-2-[5-amino-1-(5-phospho-beta-D-ribosyl)imidazole-4-carboxamido]succinate + ADP + phosphate + 2 H(+). Its pathway is purine metabolism; IMP biosynthesis via de novo pathway; 5-amino-1-(5-phospho-D-ribosyl)imidazole-4-carboxamide from 5-amino-1-(5-phospho-D-ribosyl)imidazole-4-carboxylate: step 1/2. The polypeptide is Phosphoribosylaminoimidazole-succinocarboxamide synthase (Listeria monocytogenes serovar 1/2a (strain ATCC BAA-679 / EGD-e)).